Consider the following 284-residue polypeptide: uncharacterized protein (284 aa).

The region spanning 4-133 (PLHLFWHRRD…AVHRQWDQLL (130 aa)) is the Photolyase/cryptochrome alpha/beta domain.

This is an uncharacterized protein from Synechococcus sp. (strain PCC 6716).